Consider the following 507-residue polypeptide: Acetylcholine receptor subunit beta-type lev-1 (507 aa).

The signal sequence occupies residues 1–31 (MMLGGGGGCGAGGTWLGFLVFLAVSLRNHST). 3 N-linked (GlcNAc...) asparagine glycosylation sites follow: N28, N58, and N109. Residues 32-138 (CEDIDAEDRL…NNADGNYEVS (107 aa)) are Extracellular-facing. A helical transmembrane segment spans residues 139 to 159 (FMCNVLILSTGTVLWVPPAIY). Cysteines 163 and 177 form a disulfide. Helical transmembrane passes span 243 to 263 (VVLI…FYLP), 271 to 291 (GLTM…SKIL), and 305 to 325 (LLLT…ICNI). Residues 373 to 392 (GPSVEENPMRSGEHHPLCRH) are disordered. Residues 379–392 (NPMRSGEHHPLCRH) are compositionally biased toward basic and acidic residues. Residues 454 to 474 (FLLYGFFGATVGGTIGIIFTA) traverse the membrane as a helical segment.

It belongs to the ligand-gated ion channel (TC 1.A.9) family. Acetylcholine receptor (TC 1.A.9.1) subfamily. As to quaternary structure, interacts with unc-29. Component of nicotinic acetylcholine receptor composed of 2 non-alpha subunits lev-1 and unc-29, and 3 alpha subunits unc-38, unc-63 and lev-8.

It is found in the postsynaptic cell membrane. The protein localises to the cell membrane. Functionally, non-alpha subunit of nicotinic acetylcholine receptor (nAChR). Involved in nAChR sensitivity to nicotine. The chain is Acetylcholine receptor subunit beta-type lev-1 (lev-1) from Caenorhabditis elegans.